We begin with the raw amino-acid sequence, 154 residues long: 6,7-dimethyl-8-ribityllumazine synthase (154 aa).

Residues phenylalanine 15, 47–49, and 71–73 each bind 5-amino-6-(D-ribitylamino)uracil; these read TFD and AVI. 76 to 77 is a (2S)-2-hydroxy-3-oxobutyl phosphate binding site; the sequence is ET. The active-site Proton donor is the histidine 79. Residue leucine 104 coordinates 5-amino-6-(D-ribitylamino)uracil. Residue arginine 119 participates in (2S)-2-hydroxy-3-oxobutyl phosphate binding.

This sequence belongs to the DMRL synthase family.

The catalysed reaction is (2S)-2-hydroxy-3-oxobutyl phosphate + 5-amino-6-(D-ribitylamino)uracil = 6,7-dimethyl-8-(1-D-ribityl)lumazine + phosphate + 2 H2O + H(+). The protein operates within cofactor biosynthesis; riboflavin biosynthesis; riboflavin from 2-hydroxy-3-oxobutyl phosphate and 5-amino-6-(D-ribitylamino)uracil: step 1/2. In terms of biological role, catalyzes the formation of 6,7-dimethyl-8-ribityllumazine by condensation of 5-amino-6-(D-ribitylamino)uracil with 3,4-dihydroxy-2-butanone 4-phosphate. This is the penultimate step in the biosynthesis of riboflavin. This is 6,7-dimethyl-8-ribityllumazine synthase from Saccharolobus islandicus (strain L.S.2.15 / Lassen #1) (Sulfolobus islandicus).